A 130-amino-acid polypeptide reads, in one-letter code: Holo-[acyl-carrier-protein] synthase (130 aa).

Mg(2+)-binding residues include Asp8 and Glu62.

The protein belongs to the P-Pant transferase superfamily. AcpS family. Requires Mg(2+) as cofactor.

It is found in the cytoplasm. It catalyses the reaction apo-[ACP] + CoA = holo-[ACP] + adenosine 3',5'-bisphosphate + H(+). Transfers the 4'-phosphopantetheine moiety from coenzyme A to a Ser of acyl-carrier-protein. In Polynucleobacter asymbioticus (strain DSM 18221 / CIP 109841 / QLW-P1DMWA-1) (Polynucleobacter necessarius subsp. asymbioticus), this protein is Holo-[acyl-carrier-protein] synthase.